Here is a 197-residue protein sequence, read N- to C-terminus: Recombination protein RecR (197 aa).

The segment at 57–72 (CSVCFGITEEDPCRLC) adopts a C4-type zinc-finger fold. A Toprim domain is found at 79-174 (TSLCVVEEPQ…RVTRLAHGIP (96 aa)).

It belongs to the RecR family.

Its function is as follows. May play a role in DNA repair. It seems to be involved in an RecBC-independent recombinational process of DNA repair. It may act with RecF and RecO. The sequence is that of Recombination protein RecR from Geobacter metallireducens (strain ATCC 53774 / DSM 7210 / GS-15).